A 92-amino-acid chain; its full sequence is Large ribosomal subunit protein bL27 (92 aa).

Residues 1–8 (MLMNLQFF) constitute a propeptide that is removed on maturation. The segment at 11–30 (HKGGGSTANGRDSAGRRLGA) is disordered.

This sequence belongs to the bacterial ribosomal protein bL27 family. In terms of processing, the N-terminus is cleaved by ribosomal processing cysteine protease Prp.

The polypeptide is Large ribosomal subunit protein bL27 (Lactiplantibacillus plantarum (strain ATCC BAA-793 / NCIMB 8826 / WCFS1) (Lactobacillus plantarum)).